The primary structure comprises 304 residues: DDRGK domain-containing protein 1 (304 aa).

Topologically, residues 1–2 (MD) are lumenal. Residues 3 to 23 (LIILVGIAIALLVVIISLYLL) form a helical membrane-spanning segment. At 24-304 (QKKNSTTEAK…LTPVSAEGSS (281 aa)) the chain is on the cytoplasmic side. The interval 31–174 (EAKPAAAAPQ…AERLAKEERE (144 aa)) is disordered. A compositionally biased stretch (low complexity) spans 53–82 (RRAQIARNQRNRLRQNAPVAAAAPQAEAPA). The segment covering 105–174 (LDEKMGAKKR…AERLAKEERE (70 aa)) has biased composition (basic and acidic residues).

The protein belongs to the DDRGK1 family. As to quaternary structure, interacts with Atg9; the interaction is transient.

It is found in the endoplasmic reticulum membrane. Functionally, substrate adapter for ufmylation, the covalent attachment of the ubiquitin-like modifier UFM1 to substrate proteins. Required for ufmylation of Atg9; protects the nervous system during aging, possibly by stabilizing Atg9 and supporting its function. In Drosophila ananassae (Fruit fly), this protein is DDRGK domain-containing protein 1.